The chain runs to 102 residues: Envelope glycoprotein N (102 aa).

The signal sequence occupies residues 1-32 (MGKVLRKPFAKAVPLLFLAATWLLTGVLPAGA). Residues 33-69 (SSPTNAAAASLTEAQDQFYSYTCNADTFSPSLTSFAS) are Virion surface-facing. A helical transmembrane segment spans residues 70 to 90 (IWALLTLVLVIIASAIYLMYV). Topologically, residues 91–102 (CFNKFVNTLLTD) are intravirion.

It belongs to the herpesviridae glycoprotein N family. As to quaternary structure, interacts (via N-terminus) with gM (via N-terminus). The gM-gN heterodimer forms the gCII complex. O-glycosylated. Contains alpha 2,6-sialic acid residues.

The protein localises to the virion membrane. It localises to the host membrane. The protein resides in the host Golgi apparatus. Its subcellular location is the host trans-Golgi network. Its function is as follows. Envelope glycoprotein necessary for proper maturation of gM and modulation of its membrane fusion activity. Also plays a critical role in virion morphogenesis. This is Envelope glycoprotein N from Epstein-Barr virus (strain AG876) (HHV-4).